We begin with the raw amino-acid sequence, 267 residues long: MARNAEKAMTALARWRRMKEEEERGPIARRPHDVKDCRNLSDAERFRREIVRDASKKITAIQNPGLGEFKLRDLNDEVNRLIKLKHAWEQRIRELGGTDYRKYAQKELDAIGRETGNSRGYKYFGAAKDLPGVRELFEKSTEGEEQRRHRADLLRNIDAHYFGYLDDEDGRLIPLEKLIEEKNIERINKEFAEKQAQKQQTASDAAPENIYKVEEDDDDDLETQESTVIGEDGRPMTIRHVLLPTQQDIEEMLLEQKKQELMAKYLD.

The stretch at 175 to 204 (LEKLIEEKNIERINKEFAEKQAQKQQTASD) forms a coiled coil. The disordered stretch occupies residues 195-221 (QAQKQQTASDAAPENIYKVEEDDDDDL).

The protein belongs to the ISY1 family. Ubiquitously expressed.

The protein localises to the nucleus. Its function is as follows. Regulates the processing of the mir-60 microRNA (miRNA), which in turn negatively regulates the expression of the transcription factor zip-10. Does not affect the splicing of zip-10. This chain is Protein isy-1, found in Caenorhabditis elegans.